The sequence spans 542 residues: Chaperonin GroEL 4 (542 aa).

ATP contacts are provided by residues 30–33 (TLGP), Lys51, 87–91 (DGTTT), Gly415, and Asp496.

This sequence belongs to the chaperonin (HSP60) family. In terms of assembly, forms a cylinder of 14 subunits composed of two heptameric rings stacked back-to-back. Interacts with the co-chaperonin GroES.

It is found in the cytoplasm. The enzyme catalyses ATP + H2O + a folded polypeptide = ADP + phosphate + an unfolded polypeptide.. In terms of biological role, together with its co-chaperonin GroES, plays an essential role in assisting protein folding. The GroEL-GroES system forms a nano-cage that allows encapsulation of the non-native substrate proteins and provides a physical environment optimized to promote and accelerate protein folding. The protein is Chaperonin GroEL 4 of Rhizobium etli (strain ATCC 51251 / DSM 11541 / JCM 21823 / NBRC 15573 / CFN 42).